We begin with the raw amino-acid sequence, 1480 residues long: Cystic fibrosis transmembrane conductance regulator (1480 aa).

Topologically, residues 1–77 are cytoplasmic; it reads MQRSPLEKAS…KLINALRRCF (77 aa). The helical transmembrane segment at 78–98 threads the bilayer; the sequence is FWRFMFYGIFLYLGEVTKAVQ. One can recognise an ABC transmembrane type-1 1 domain in the interval 81 to 365; it reads FMFYGIFLYL…WAVQTWYDSL (285 aa). The Extracellular segment spans residues 99-122; that stretch reads PLLLGRIIASYDPDNKEERSIAIY. The chain crosses the membrane as a helical span at residues 123 to 146; the sequence is LGIGLCLLFIVRTLLLHPAIFGLH. At 147–195 the chain is on the cytoplasmic side; that stretch reads HIGMQMRIAMFSLIYKKTLKLSSRVLDKISIGQLVSLLSNNLNKFDEGL. The chain crosses the membrane as a helical span at residues 196–216; it reads ALAHFVWIAPLQVALLMGLIW. Residues 217–222 are Extracellular-facing; the sequence is ELLQAS. Residues 223-243 form a helical membrane-spanning segment; sequence AFCGLGFLIVLALFQAGLGRM. At 244–298 the chain is on the cytoplasmic side; that stretch reads MMKYRDQRAGKISERLVITSEMIENIQSVKAYCWEEAMEKMIENLRQTELKLTRK. Residues 299–319 traverse the membrane as a helical segment; the sequence is AAYVRYFNSSAFFFSGFFVVF. Over 320–339 the chain is Extracellular; sequence LSVLPYALIKGIILRKIFTT. The chain crosses the membrane as a helical span at residues 340–358; it reads ISFCIVLRMAVTRQFPWAV. Over 359 to 858 the chain is Cytoplasmic; sequence QTWYDSLGAI…YLRYITVHKS (500 aa). ATP-binding positions include tryptophan 401, serine 434, 458–465, and glutamine 493; that span reads GSTGAGKT. The ABC transporter 1 domain occupies 423 to 646; it reads NGDDSLFFSN…QPDFSSKLMG (224 aa). A lipid anchor (S-palmitoyl cysteine) is attached at cysteine 524. At serine 549 the chain carries Phosphoserine. The disordered R region stretch occupies residues 654 to 831; sequence SAERRNSILT…EEINEEDLKE (178 aa). Phosphoserine; by PKA is present on residues serine 660 and serine 670. Serine 686 is modified (phosphoserine; by PKC). A Glycyl lysine isopeptide (Lys-Gly) (interchain with G-Cter in ubiquitin) cross-link involves residue lysine 688. Phosphoserine; by PKA is present on residues serine 700 and serine 712. The residue at position 717 (threonine 717) is a Phosphothreonine. A phosphoserine; by PKA mark is found at serine 737, serine 753, and serine 768. The residue at position 790 (serine 790) is a Phosphoserine; by PKC. Phosphoserine; by PKA is present on residues serine 795 and serine 813. Residues 859 to 879 form a helical membrane-spanning segment; that stretch reads LIFVLIWCLVIFLAEVAASLV. Residues 859–1155 form the ABC transmembrane type-1 2 domain; the sequence is LIFVLIWCLV…AVNSSIDVDS (297 aa). Residues 880–918 are Extracellular-facing; the sequence is VLWLLGNTPLQDKGNSTHSRNNSYAVIITSTSSYYVFYI. Asparagine 894 and asparagine 900 each carry an N-linked (GlcNAc...) asparagine glycan. A discontinuously helical membrane pass occupies residues 919–939; sequence YVGVADTLLAMGFFRGLPLVH. The Cytoplasmic portion of the chain corresponds to 940 to 990; sequence TLITVSKILHHKMLHSVLQAPMSTLNTLKAGGILNRFSKDIAILDDLLPLT. A helical transmembrane segment spans residues 991–1011; the sequence is IFDFIQLLLIVIGAIAVVAVL. Residues 1012-1013 lie on the Extracellular side of the membrane; it reads QP. The chain crosses the membrane as a helical span at residues 1014–1034; that stretch reads YIFVATVPVIVAFIMLRAYFL. The Cytoplasmic segment spans residues 1035–1095; sequence QTSQQLKQLE…TANWFLYLST (61 aa). Residues 1096-1116 form a helical membrane-spanning segment; sequence LRWFQMRIEMIFVIFFIAVTF. Topologically, residues 1117-1130 are extracellular; sequence ISILTTGEGEGRVG. Residues 1131 to 1151 form a helical membrane-spanning segment; it reads IILTLAMNIMSTLQWAVNSSI. At 1152-1480 the chain is on the cytoplasmic side; it reads DVDSLMRSVS…TEEEVQDTRL (329 aa). The ABC transporter 2 domain maps to 1210–1443; sequence MTVKDLTAKY…RSLFRQAISP (234 aa). ATP contacts are provided by residues tyrosine 1219 and 1244-1251; that span reads GRTGSGKS. Positions 1386–1480 are interaction with GORASP2; that stretch reads RTLKQAFADC…TEEEVQDTRL (95 aa). The S-palmitoyl cysteine moiety is linked to residue cysteine 1395. Residues serine 1444 and serine 1456 each carry the phosphoserine modification. The segment at 1452-1480 is disordered; that stretch reads HRNSSKCKSKPQIAALKEETEEEVQDTRL. A compositionally biased stretch (acidic residues) spans 1470 to 1480; it reads ETEEEVQDTRL. A PDZ-binding motif is present at residues 1478 to 1480; sequence TRL.

The protein belongs to the ABC transporter superfamily. ABCC family. CFTR transporter (TC 3.A.1.202) subfamily. In terms of assembly, monomer; does not require oligomerization for channel activity. May form oligomers in the membrane. Interacts with SLC26A3, SLC26A6 and SHANK2. Interacts with NHERF1 and MYO6. Interacts (via C-terminus) with GOPC (via PDZ domain); this promotes CFTR internalization and thereby decreases channel activity. Interacts with SLC4A7 through NHERF1. Found in a complex with MYO5B and RAB11A. Interacts with ANO1. Interacts with SLC26A8. Interacts with AHCYL1; the interaction increases CFTR activity. Interacts with CSE1L. The core-glycosylated form interacts with GORASP2 (via PDZ GRASP-type 1 domain) in respone to ER stress. Interacts with MARCHF2; the interaction leads to CFTR ubiqtuitination and degradation. Interacts with ADGRG2. Post-translationally, N-glycosylated. In terms of processing, phosphorylated; cAMP treatment promotes phosphorylation and activates the channel. Dephosphorylation decreases the ATPase activity (in vitro). Phosphorylation at PKA sites activates the channel. Phosphorylation at PKC sites enhances the response to phosphorylation by PKA. Phosphorylated by AMPK; this inhibits channel activity. Ubiquitinated, leading to its degradation in the lysosome. Deubiquitination by USP10 in early endosomes enhances its endocytic recycling to the cell membrane. Ubiquitinated by RNF185 during ER stress. Ubiquitinated by MARCHF2. In terms of tissue distribution, expressed in the respiratory airway, including bronchial epithelium, and in the female reproductive tract, including oviduct (at protein level). Detected in pancreatic intercalated ducts in the exocrine tissue, on epithelial cells in intralobular striated ducts in sublingual salivary glands, on apical membranes of crypt cells throughout the small and large intestine, and on the reabsorptive duct in eccrine sweat glands. Detected on the equatorial segment of the sperm head (at protein level). Detected in nasal and bronchial superficial epithelium. Expressed by the central cells on the sebaceous glands, dermal adipocytes and, at lower levels, by epithelial cells.

Its subcellular location is the apical cell membrane. The protein localises to the early endosome membrane. It is found in the cell membrane. It localises to the recycling endosome membrane. The protein resides in the endoplasmic reticulum membrane. Its subcellular location is the nucleus. It carries out the reaction ATP + H2O + closed Cl(-) channel = ADP + phosphate + open Cl(-) channel.. The enzyme catalyses chloride(in) = chloride(out). The catalysed reaction is hydrogencarbonate(in) = hydrogencarbonate(out). It catalyses the reaction ATP + H2O = ADP + phosphate + H(+). Its function is as follows. Epithelial ion channel that plays an important role in the regulation of epithelial ion and water transport and fluid homeostasis. Mediates the transport of chloride ions across the cell membrane. Possesses an intrinsic ATPase activity and utilizes ATP to gate its channel; the passive flow of anions through the channel is gated by cycles of ATP binding and hydrolysis by the ATP-binding domains. The ion channel is also permeable to HCO(3)(-); selectivity depends on the extracellular chloride concentration. In vitro, mediates ATP-dependent glutathione flux. Exerts its function also by modulating the activity of other ion channels and transporters. Plays an important role in airway fluid homeostasis. Contributes to the regulation of the pH and the ion content of the airway surface fluid layer and thereby plays an important role in defense against pathogens. Modulates the activity of the epithelial sodium channel (ENaC) complex, in part by regulating the cell surface expression of the ENaC complex. Inhibits the activity of the ENaC channel containing subunits SCNN1A, SCNN1B and SCNN1G. Inhibits the activity of the ENaC channel containing subunits SCNN1D, SCNN1B and SCNN1G, but not of the ENaC channel containing subunits SCNN1A, SCNN1B and SCNN1G. May regulate bicarbonate secretion and salvage in epithelial cells by regulating the transporter SLC4A7. Can inhibit the chloride channel activity of ANO1. Plays a role in the chloride and bicarbonate homeostasis during sperm epididymal maturation and capacitation. The polypeptide is Cystic fibrosis transmembrane conductance regulator (Homo sapiens (Human)).